We begin with the raw amino-acid sequence, 312 residues long: Zinc-finger homeodomain protein 4 (312 aa).

The disordered stretch occupies residues 20 to 74; that stretch reads GGGGSHGHMIHHHDHHAANSAPPTHNNNNTTQPPPMPLHGNGHGNNYDHHHHQDP. Residues 37–50 are compositionally biased toward low complexity; the sequence is ANSAPPTHNNNNTT. Residues 90-139 form a ZF-HD dimerization-type; degenerate zinc finger; it reads YKECLKNHAAAMGGNATDGCGEFMPSGEDGSIEALTCSACNCHRNFHRKE. The homeobox DNA-binding region spans 218 to 281; the sequence is KKRFRTKFTP…NNKIHFSKKN (64 aa).

In terms of assembly, homo- and heterodimer with other ZFHD proteins. Interacts with ZHD1, ZHD2, ZHD5, ZHD7, ZHD8, ZHD10 and ZHD11. As to expression, mostly expressed in flowers and inflorescence.

It localises to the nucleus. Functionally, putative transcription factor. Probably involved in the regulation of floral induction. This chain is Zinc-finger homeodomain protein 4 (ZHD4), found in Arabidopsis thaliana (Mouse-ear cress).